We begin with the raw amino-acid sequence, 155 residues long: RNA pyrophosphohydrolase (155 aa).

The 143-residue stretch at 5–147 (KYRPNVAAII…KRQVYRQVIA (143 aa)) folds into the Nudix hydrolase domain. A Nudix box motif is present at residues 42–63 (GGIDEGETPLEALHRELLEEIG).

Belongs to the Nudix hydrolase family. RppH subfamily. A divalent metal cation is required as a cofactor.

Accelerates the degradation of transcripts by removing pyrophosphate from the 5'-end of triphosphorylated RNA, leading to a more labile monophosphorylated state that can stimulate subsequent ribonuclease cleavage. In Helicobacter pylori (strain HPAG1), this protein is RNA pyrophosphohydrolase.